Consider the following 455-residue polypeptide: Bifunctional protein GlmU (455 aa).

Residues 1–229 (MYNCAILLAA…FEETMGVNSR (229 aa)) are pyrophosphorylase. UDP-N-acetyl-alpha-D-glucosamine-binding positions include 8-11 (LAAG), K22, Q73, and 78-79 (GT). D103 is a binding site for Mg(2+). Positions 140, 155, 170, and 227 each coordinate UDP-N-acetyl-alpha-D-glucosamine. N227 provides a ligand contact to Mg(2+). The tract at residues 230 to 250 (LQLAEVEAIMRKRINAMHLEN) is linker. The interval 251-455 (GVTIIDPNNT…EDWVKKKDEK (205 aa)) is N-acetyltransferase. Positions 332 and 350 each coordinate UDP-N-acetyl-alpha-D-glucosamine. The active-site Proton acceptor is H362. Positions 365 and 376 each coordinate UDP-N-acetyl-alpha-D-glucosamine. Acetyl-CoA-binding positions include 385–386 (NY), A422, and R439.

It in the N-terminal section; belongs to the N-acetylglucosamine-1-phosphate uridyltransferase family. This sequence in the C-terminal section; belongs to the transferase hexapeptide repeat family. In terms of assembly, homotrimer. It depends on Mg(2+) as a cofactor.

It localises to the cytoplasm. The enzyme catalyses alpha-D-glucosamine 1-phosphate + acetyl-CoA = N-acetyl-alpha-D-glucosamine 1-phosphate + CoA + H(+). It carries out the reaction N-acetyl-alpha-D-glucosamine 1-phosphate + UTP + H(+) = UDP-N-acetyl-alpha-D-glucosamine + diphosphate. It participates in nucleotide-sugar biosynthesis; UDP-N-acetyl-alpha-D-glucosamine biosynthesis; N-acetyl-alpha-D-glucosamine 1-phosphate from alpha-D-glucosamine 6-phosphate (route II): step 2/2. It functions in the pathway nucleotide-sugar biosynthesis; UDP-N-acetyl-alpha-D-glucosamine biosynthesis; UDP-N-acetyl-alpha-D-glucosamine from N-acetyl-alpha-D-glucosamine 1-phosphate: step 1/1. Its pathway is bacterial outer membrane biogenesis; LPS lipid A biosynthesis. Its function is as follows. Catalyzes the last two sequential reactions in the de novo biosynthetic pathway for UDP-N-acetylglucosamine (UDP-GlcNAc). The C-terminal domain catalyzes the transfer of acetyl group from acetyl coenzyme A to glucosamine-1-phosphate (GlcN-1-P) to produce N-acetylglucosamine-1-phosphate (GlcNAc-1-P), which is converted into UDP-GlcNAc by the transfer of uridine 5-monophosphate (from uridine 5-triphosphate), a reaction catalyzed by the N-terminal domain. The sequence is that of Bifunctional protein GlmU from Clostridium tetani (strain Massachusetts / E88).